The sequence spans 499 residues: Probable cytosol aminopeptidase (499 aa).

Mn(2+) is bound by residues K263 and D268. Residue K275 is part of the active site. Mn(2+) is bound by residues D286, D345, and E347. R349 is an active-site residue.

Belongs to the peptidase M17 family. Requires Mn(2+) as cofactor.

The protein resides in the cytoplasm. The enzyme catalyses Release of an N-terminal amino acid, Xaa-|-Yaa-, in which Xaa is preferably Leu, but may be other amino acids including Pro although not Arg or Lys, and Yaa may be Pro. Amino acid amides and methyl esters are also readily hydrolyzed, but rates on arylamides are exceedingly low.. It carries out the reaction Release of an N-terminal amino acid, preferentially leucine, but not glutamic or aspartic acids.. Functionally, presumably involved in the processing and regular turnover of intracellular proteins. Catalyzes the removal of unsubstituted N-terminal amino acids from various peptides. The protein is Probable cytosol aminopeptidase of Bradyrhizobium sp. (strain BTAi1 / ATCC BAA-1182).